A 103-amino-acid chain; its full sequence is Co-chaperonin GroES (103 aa).

The protein belongs to the GroES chaperonin family. Heptamer of 7 subunits arranged in a ring. Interacts with the chaperonin GroEL.

It localises to the cytoplasm. Its function is as follows. Together with the chaperonin GroEL, plays an essential role in assisting protein folding. The GroEL-GroES system forms a nano-cage that allows encapsulation of the non-native substrate proteins and provides a physical environment optimized to promote and accelerate protein folding. GroES binds to the apical surface of the GroEL ring, thereby capping the opening of the GroEL channel. In Parasynechococcus marenigrum (strain WH8102), this protein is Co-chaperonin GroES.